Consider the following 332-residue polypeptide: Ribosomal RNA small subunit methyltransferase C (332 aa).

Belongs to the methyltransferase superfamily. RsmC family. In terms of assembly, monomer.

It is found in the cytoplasm. The enzyme catalyses guanosine(1207) in 16S rRNA + S-adenosyl-L-methionine = N(2)-methylguanosine(1207) in 16S rRNA + S-adenosyl-L-homocysteine + H(+). Specifically methylates the guanine in position 1207 of 16S rRNA in the 30S particle. The chain is Ribosomal RNA small subunit methyltransferase C from Pseudomonas putida (strain GB-1).